A 150-amino-acid chain; its full sequence is D-aminoacyl-tRNA deacylase (150 aa).

A Gly-cisPro motif, important for rejection of L-amino acids motif is present at residues 138 to 139 (GP).

This sequence belongs to the DTD family. Homodimer.

It localises to the cytoplasm. The enzyme catalyses glycyl-tRNA(Ala) + H2O = tRNA(Ala) + glycine + H(+). The catalysed reaction is a D-aminoacyl-tRNA + H2O = a tRNA + a D-alpha-amino acid + H(+). An aminoacyl-tRNA editing enzyme that deacylates mischarged D-aminoacyl-tRNAs. Also deacylates mischarged glycyl-tRNA(Ala), protecting cells against glycine mischarging by AlaRS. Acts via tRNA-based rather than protein-based catalysis; rejects L-amino acids rather than detecting D-amino acids in the active site. By recycling D-aminoacyl-tRNA to D-amino acids and free tRNA molecules, this enzyme counteracts the toxicity associated with the formation of D-aminoacyl-tRNA entities in vivo and helps enforce protein L-homochirality. This Chlorobium phaeobacteroides (strain DSM 266 / SMG 266 / 2430) protein is D-aminoacyl-tRNA deacylase.